A 201-amino-acid chain; its full sequence is MELVLKDAQSALEVSEATFGRDFNEALVHQVVVAYAANARQGTRAQKTRAEVTGSGKKPWRQKGTGRARAGTVKGPIWRGGGVTFAAKTQDHSQKVNKKMYRGALKSIFSELVRQDRLIVVESFGVEAPKTKELKAKLNEMQLEDVLIVTPEVDENLFLAARNLYKVDVRDVAGIDPVSLIAFNKVLVTAEAIKQIEEMLG.

Positions 45 to 71 (AQKTRAEVTGSGKKPWRQKGTGRARAG) are disordered.

This sequence belongs to the universal ribosomal protein uL4 family. Part of the 50S ribosomal subunit.

Functionally, one of the primary rRNA binding proteins, this protein initially binds near the 5'-end of the 23S rRNA. It is important during the early stages of 50S assembly. It makes multiple contacts with different domains of the 23S rRNA in the assembled 50S subunit and ribosome. In terms of biological role, forms part of the polypeptide exit tunnel. The sequence is that of Large ribosomal subunit protein uL4 from Shewanella pealeana (strain ATCC 700345 / ANG-SQ1).